A 700-amino-acid chain; its full sequence is Elongation factor G (700 aa).

The 283-residue stretch at 8-290 (ERYRNIGISA…AVIDYLPAPT (283 aa)) folds into the tr-type G domain. Residues 17-24 (AHIDAGKT), 88-92 (DTPGH), and 142-145 (NKMD) each bind GTP.

This sequence belongs to the TRAFAC class translation factor GTPase superfamily. Classic translation factor GTPase family. EF-G/EF-2 subfamily.

The protein resides in the cytoplasm. Functionally, catalyzes the GTP-dependent ribosomal translocation step during translation elongation. During this step, the ribosome changes from the pre-translocational (PRE) to the post-translocational (POST) state as the newly formed A-site-bound peptidyl-tRNA and P-site-bound deacylated tRNA move to the P and E sites, respectively. Catalyzes the coordinated movement of the two tRNA molecules, the mRNA and conformational changes in the ribosome. This is Elongation factor G (fusA) from Pasteurella multocida (strain Pm70).